Consider the following 91-residue polypeptide: Small ribosomal subunit protein uS15 (91 aa).

Belongs to the universal ribosomal protein uS15 family. In terms of assembly, part of the 30S ribosomal subunit. Forms a bridge to the 50S subunit in the 70S ribosome, contacting the 23S rRNA.

In terms of biological role, one of the primary rRNA binding proteins, it binds directly to 16S rRNA where it helps nucleate assembly of the platform of the 30S subunit by binding and bridging several RNA helices of the 16S rRNA. Forms an intersubunit bridge (bridge B4) with the 23S rRNA of the 50S subunit in the ribosome. This Rickettsia prowazekii (strain Madrid E) protein is Small ribosomal subunit protein uS15.